A 122-amino-acid chain; its full sequence is MIQMQTNLDVADNSGARRVMCIKVLGGSKRKYAGVGDVIVVSVKEAIPRGRVKKGDVMKAVVVRTAKDVKRADGSVIRFDKNAAVLINNQKEPIGTRIFGPVPRELRARNHMKIISLAPEVL.

It belongs to the universal ribosomal protein uL14 family. In terms of assembly, part of the 50S ribosomal subunit. Forms a cluster with proteins L3 and L19. In the 70S ribosome, L14 and L19 interact and together make contacts with the 16S rRNA in bridges B5 and B8.

In terms of biological role, binds to 23S rRNA. Forms part of two intersubunit bridges in the 70S ribosome. The polypeptide is Large ribosomal subunit protein uL14 (Methylobacterium radiotolerans (strain ATCC 27329 / DSM 1819 / JCM 2831 / NBRC 15690 / NCIMB 10815 / 0-1)).